A 137-amino-acid chain; its full sequence is Large ribosomal subunit protein uL16 (137 aa).

The protein belongs to the universal ribosomal protein uL16 family. Part of the 50S ribosomal subunit.

Its function is as follows. Binds 23S rRNA and is also seen to make contacts with the A and possibly P site tRNAs. The sequence is that of Large ribosomal subunit protein uL16 from Nitrobacter hamburgensis (strain DSM 10229 / NCIMB 13809 / X14).